The following is a 119-amino-acid chain: Large ribosomal subunit protein bL20 (119 aa).

Belongs to the bacterial ribosomal protein bL20 family.

Binds directly to 23S ribosomal RNA and is necessary for the in vitro assembly process of the 50S ribosomal subunit. It is not involved in the protein synthesizing functions of that subunit. The chain is Large ribosomal subunit protein bL20 from Nitrosococcus oceani (strain ATCC 19707 / BCRC 17464 / JCM 30415 / NCIMB 11848 / C-107).